We begin with the raw amino-acid sequence, 105 residues long: Guanidinium exporter (105 aa).

The helical transmembrane segment at 1–21 (MSWIILVIAGLLEVVWAVGLK) threads the bilayer. The Cytoplasmic portion of the chain corresponds to 22-28 (YTHGFSR). Residues 29–49 (LTPSVITVTAMIVSLALLAWA) form a helical membrane-spanning segment. The Periplasmic portion of the chain corresponds to 50-57 (MKSLPVGT). A helical transmembrane segment spans residues 58–78 (AYAVWTGIGAVGAAITGIVLL). Topologically, residues 79–81 (GES) are cytoplasmic. Residues 82–102 (ANPMRLASLALIVLGIIGLKL) form a helical membrane-spanning segment. The Periplasmic segment spans residues 103-105 (STH).

The protein belongs to the drug/metabolite transporter (DMT) superfamily. Small multidrug resistance (SMR) (TC 2.A.7.1) family. Gdx/SugE subfamily.

The protein resides in the cell inner membrane. Functionally, guanidinium ion exporter. Couples guanidinium export to the proton motive force, exchanging one guanidinium ion for two protons. This Escherichia coli O6:H1 (strain CFT073 / ATCC 700928 / UPEC) protein is Guanidinium exporter.